We begin with the raw amino-acid sequence, 219 residues long: MESGARPIGSSCSSPAALSREYKLVMLGAGGVGKSAMTMQFISHRFPEDHDPTIEDAYKIRIRIDDEPANLDILDTAGQAEFTAMRDQYMRAGEGFIICYSITDRRSFHEVREFKQLIYRVRRTDDTPVVLVGNKSDLKQLRQVSKEEGLSLAREFSCPFFETSAAYRYYIDDVFHALVREIRKKEKELVLAMEKKAKPKNSVWKRLKSPFRRKKDSVT.

GTP contacts are provided by residues 28-35 (GAGGVGKS), 75-79 (DTAGQ), and 134-137 (NKSD).

This sequence belongs to the small GTPase superfamily. Ras family. As to quaternary structure, interacts with AFDN, the C-terminal domain of RALGDS and RLF, but not with RIN1 and PIK3CA. RLF binds exclusively to the active GTP-bound form. Strongly interacts with BRAF, but only weakly with RAF1. BARF and RAF1 association is dependent upon the GTP-bound state. Interacts with RGL3. Expressed in many tissues.

Its subcellular location is the cell membrane. It carries out the reaction GTP + H2O = GDP + phosphate + H(+). Alternates between an inactive form bound to GDP and an active form bound to GTP. In terms of biological role, plays a crucial role in coupling NGF stimulation to the activation of both EPHB2 and MAPK14 signaling pathways and in NGF-dependent neuronal differentiation. Involved in ELK1 transactivation through the Ras-MAPK signaling cascade that mediates a wide variety of cellular functions, including cell proliferation, survival, and differentiation. This is GTP-binding protein Rit1 (Rit1) from Mus musculus (Mouse).